Reading from the N-terminus, the 345-residue chain is Fe(3+) ions import ATP-binding protein FbpC (345 aa).

The ABC transporter domain occupies 4–236 (LELHGIGKSY…PVDEPTASFL (233 aa)). 36 to 43 (GPSGSGKT) lines the ATP pocket.

It belongs to the ABC transporter superfamily. Fe(3+) ion importer (TC 3.A.1.10) family. The complex is composed of two ATP-binding proteins (FbpC), two transmembrane proteins (FbpB) and a solute-binding protein (FbpA).

The protein resides in the cell inner membrane. It catalyses the reaction Fe(3+)(out) + ATP + H2O = Fe(3+)(in) + ADP + phosphate + H(+). In terms of biological role, part of the ABC transporter complex FbpABC involved in Fe(3+) ions import. Responsible for energy coupling to the transport system. This is Fe(3+) ions import ATP-binding protein FbpC from Serratia marcescens.